We begin with the raw amino-acid sequence, 436 residues long: Chromosomal replication initiator protein DnaA (436 aa).

Residues 1–69 (MLADEVLELL…AHLFEVKTGT (69 aa)) form a domain I, interacts with DnaA modulators region. The interval 69–99 (TKPNVEITTQTKLKSSKQNQVNIKQIKAQST) is domain II. The domain III, AAA+ region stretch occupies residues 100 to 314 (LLNPAYTFEN…SAIINLNAYA (215 aa)). Residues G144, G146, K147, and T148 each contribute to the ATP site. Residues 315 to 436 (NLMRQEITLD…ELKNKILTKG (122 aa)) are domain IV, binds dsDNA.

Belongs to the DnaA family. In terms of assembly, oligomerizes as a right-handed, spiral filament on DNA at oriC.

It localises to the cytoplasm. In terms of biological role, plays an essential role in the initiation and regulation of chromosomal replication. ATP-DnaA binds to the origin of replication (oriC) to initiate formation of the DNA replication initiation complex once per cell cycle. Binds the DnaA box (a 9 base pair repeat at the origin) and separates the double-stranded (ds)DNA. Forms a right-handed helical filament on oriC DNA; dsDNA binds to the exterior of the filament while single-stranded (ss)DNA is stabiized in the filament's interior. The ATP-DnaA-oriC complex binds and stabilizes one strand of the AT-rich DNA unwinding element (DUE), permitting loading of DNA polymerase. After initiation quickly degrades to an ADP-DnaA complex that is not apt for DNA replication. Binds acidic phospholipids. This Campylobacter curvus (strain 525.92) protein is Chromosomal replication initiator protein DnaA.